Reading from the N-terminus, the 172-residue chain is Secretory-abundant heat soluble protein 64681 (172 aa).

An N-terminal signal peptide occupies residues 1-19 (MSRTIVALILLGLAALAAA). The segment at 30 to 59 (EWAGKAWLGKWVSTDRSENWDAFVEALGLP) is SAHS-c1. The segment at 74-102 (WKEGDHYHHQIIIADKSYKQDIQFKLGEE) is SAHS-c2. N-linked (GlcNAc...) asparagine glycans are attached at residues asparagine 108 and asparagine 133. The segment at 115 to 164 (KYTEVGDNLQNEVKIPSKNKTISDSYVVKGDELEKTYKINDVVAKRWYKK) is SAHS-c3.

Belongs to the Secretory-abundant heat soluble protein (SAHS) family.

The protein resides in the secreted. In terms of biological role, secreted heat soluble protein acting as a molecular shield in water-deficient condition. Tardigrade-specific intrinsically disordered proteins (TDPs) are essential for desiccation tolerance by forming non-crystalline amorphous solids upon desiccation, and this vitrified state mirrors their protective capabilities. The polypeptide is Secretory-abundant heat soluble protein 64681 (Hypsibius exemplaris (Freshwater tardigrade)).